The sequence spans 396 residues: 8-amino-7-oxononanoate synthase (396 aa).

Arg-19 contacts substrate. A pyridoxal 5'-phosphate-binding site is contributed by 106-107 (GY). Residue His-131 coordinates substrate. Positions 176, 204, and 233 each coordinate pyridoxal 5'-phosphate. N6-(pyridoxal phosphate)lysine is present on Lys-236. Position 350 (Thr-350) interacts with substrate.

This sequence belongs to the class-II pyridoxal-phosphate-dependent aminotransferase family. BioF subfamily. As to quaternary structure, homodimer. The cofactor is pyridoxal 5'-phosphate.

The catalysed reaction is 6-carboxyhexanoyl-[ACP] + L-alanine + H(+) = (8S)-8-amino-7-oxononanoate + holo-[ACP] + CO2. It functions in the pathway cofactor biosynthesis; biotin biosynthesis. Its function is as follows. Catalyzes the decarboxylative condensation of pimeloyl-[acyl-carrier protein] and L-alanine to produce 8-amino-7-oxononanoate (AON), [acyl-carrier protein], and carbon dioxide. The sequence is that of 8-amino-7-oxononanoate synthase from Pseudomonas syringae pv. tomato (strain ATCC BAA-871 / DC3000).